Consider the following 319-residue polypeptide: MKPENKLPVLDLISAEMKTVVNTLQPDLPPWPATGTIAEQRQYYTLERRFWNAGAPEMATKAYMVPTKYGQVETRLFCPQPDSPATLFYLHGGGFILGNLDTHDRIMRLLASYSQCTVIGIDYTLSPEARFPQVIEEIVAACCYFHQQAEDYQINMSRIGFAGDSAGAMLALASALWLRDKQIDCGKVAGVLLWYGLYGLRDSVTRRLLGGVWDGLTQQDLQMYEEAYLSNDADRESPYYCLFNNDLTREVPPCFIAGAEFDPLLDDSRLLYQTLAAHQQPCEFKLYPGTLHAFLHYSRMMKTADEALRDGAQFFTAQL.

The Involved in the stabilization of the negatively charged intermediate by the formation of the oxyanion hole signature appears at 91–93; the sequence is HGG. Catalysis depends on residues Ser165, Asp262, and His292.

Belongs to the 'GDXG' lipolytic enzyme family. As to quaternary structure, homodimer. Interacts with MalT and MelA.

Its subcellular location is the cytoplasm. In terms of biological role, displays esterase activity towards short chain fatty esters (acyl chain length of up to 8 carbons). Able to hydrolyze triacetylglycerol (triacetin) and tributyrylglycerol (tributyrin), but not trioleylglycerol (triolein) or cholesterol oleate. Negatively regulates MalT activity by antagonizing maltotriose binding. Inhibits MelA galactosidase activity. This is Acetyl esterase from Escherichia coli O157:H7.